The following is a 447-amino-acid chain: Ribulose bisphosphate carboxylase large chain (447 aa).

Residues N89 and T139 each coordinate substrate. The active-site Proton acceptor is K141. K143 is a binding site for substrate. The Mg(2+) site is built by K167, D169, and E170. The residue at position 167 (K167) is an N6-carboxylysine. The active-site Proton acceptor is H260. Residues R261, H293, and S345 each coordinate substrate.

This sequence belongs to the RuBisCO large chain family. Type I subfamily. As to quaternary structure, heterohexadecamer of 8 large chains and 8 small chains; disulfide-linked. The disulfide link is formed within the large subunit homodimers. Mg(2+) serves as cofactor. Post-translationally, the disulfide bond which can form in the large chain dimeric partners within the hexadecamer appears to be associated with oxidative stress and protein turnover.

The protein resides in the plastid. Its subcellular location is the chloroplast. The enzyme catalyses 2 (2R)-3-phosphoglycerate + 2 H(+) = D-ribulose 1,5-bisphosphate + CO2 + H2O. It carries out the reaction D-ribulose 1,5-bisphosphate + O2 = 2-phosphoglycolate + (2R)-3-phosphoglycerate + 2 H(+). Its function is as follows. RuBisCO catalyzes two reactions: the carboxylation of D-ribulose 1,5-bisphosphate, the primary event in carbon dioxide fixation, as well as the oxidative fragmentation of the pentose substrate in the photorespiration process. Both reactions occur simultaneously and in competition at the same active site. The chain is Ribulose bisphosphate carboxylase large chain from Ligustrum vulgare (Common privet).